The following is a 1375-amino-acid chain: DNA-directed RNA polymerase subunit beta (1375 aa).

Belongs to the RNA polymerase beta chain family. As to quaternary structure, the RNAP catalytic core consists of 2 alpha, 1 beta, 1 beta' and 1 omega subunit. When a sigma factor is associated with the core the holoenzyme is formed, which can initiate transcription.

The enzyme catalyses RNA(n) + a ribonucleoside 5'-triphosphate = RNA(n+1) + diphosphate. In terms of biological role, DNA-dependent RNA polymerase catalyzes the transcription of DNA into RNA using the four ribonucleoside triphosphates as substrates. The chain is DNA-directed RNA polymerase subunit beta from Campylobacter jejuni subsp. jejuni serotype O:6 (strain 81116 / NCTC 11828).